Reading from the N-terminus, the 438-residue chain is 23S rRNA (uracil(1939)-C(5))-methyltransferase RlmD (438 aa).

The TRAM domain maps to 10-68 (RVTTRQTITVKVHDLDSFGQGVAHHNGKALFVQGALPDEVAEVSIIEDKRHFSRGVATR). Residues C81, C87, C90, and C168 each coordinate [4Fe-4S] cluster. 6 residues coordinate S-adenosyl-L-methionine: Q271, F300, N305, E321, N348, and D369. The active-site Nucleophile is the C395.

The protein belongs to the class I-like SAM-binding methyltransferase superfamily. RNA M5U methyltransferase family. RlmD subfamily.

The enzyme catalyses uridine(1939) in 23S rRNA + S-adenosyl-L-methionine = 5-methyluridine(1939) in 23S rRNA + S-adenosyl-L-homocysteine + H(+). Its function is as follows. Catalyzes the formation of 5-methyl-uridine at position 1939 (m5U1939) in 23S rRNA. This Erwinia tasmaniensis (strain DSM 17950 / CFBP 7177 / CIP 109463 / NCPPB 4357 / Et1/99) protein is 23S rRNA (uracil(1939)-C(5))-methyltransferase RlmD.